We begin with the raw amino-acid sequence, 326 residues long: Fructokinase (326 aa).

The tract at residues 275-326 (EQALRNGPDPRRQSRRRHRLPRRRQSTLGARDWSLRLEQDSDPHPPDDTFSP) is disordered. Basic residues predominate over residues 287–299 (QSRRRHRLPRRRQ). Residues 307–326 (WSLRLEQDSDPHPPDDTFSP) are compositionally biased toward basic and acidic residues.

This sequence belongs to the carbohydrate kinase PfkB family.

It carries out the reaction D-fructose + ATP = D-fructose 6-phosphate + ADP + H(+). The polypeptide is Fructokinase (frk) (Rhizobium leguminosarum bv. trifolii).